Here is a 159-residue protein sequence, read N- to C-terminus: Urease accessory protein UreE (159 aa).

Belongs to the UreE family.

It localises to the cytoplasm. Functionally, involved in urease metallocenter assembly. Binds nickel. Probably functions as a nickel donor during metallocenter assembly. This is Urease accessory protein UreE from Vibrio parahaemolyticus.